Here is a 363-residue protein sequence, read N- to C-terminus: DNA replication and repair protein RecF (363 aa).

ATP is bound at residue 30–37; that stretch reads GNNAQGKT.

This sequence belongs to the RecF family.

It localises to the cytoplasm. Its function is as follows. The RecF protein is involved in DNA metabolism; it is required for DNA replication and normal SOS inducibility. RecF binds preferentially to single-stranded, linear DNA. It also seems to bind ATP. This chain is DNA replication and repair protein RecF, found in Clostridium acetobutylicum (strain ATCC 824 / DSM 792 / JCM 1419 / IAM 19013 / LMG 5710 / NBRC 13948 / NRRL B-527 / VKM B-1787 / 2291 / W).